The primary structure comprises 4083 residues: Dynein axonemal heavy chain 3 (4083 aa).

2 disordered regions span residues 1-37 and 111-132; these read MSDT…VSAN and DKTS…PSKK. Residues 1–1357 form a stem region; that stretch reads MSDTNCSAQK…HVQMITTEAL (1357 aa). Coiled coils occupy residues 1026–1052 and 1108–1133; these read IKPI…AWLK and RMTE…YLEK. AAA regions lie at residues 1358–1579, 1639–1870, 2003–2251, and 2362–2613; these read YGYE…VLTA, EALN…LHCK, TIPA…VIQG, and EFNS…LLRH. ATP-binding positions include 1396–1403, 1677–1684, 2041–2048, and 2401–2408; these read GPAGTGKT, GDPMGGKT, GPTGTGKS, and GIGGSGRQ. The tract at residues 2628–2927 is stalk; it reads FKTLLNSKRQ…NSLEKNIEIC (300 aa). Residues 2651–2714 are a coiled coil; the sequence is QKLEFASSQV…DEKEANAAAA (64 aa). AAA stretches follow at residues 3012 to 3242 and 3455 to 3679; these read LGDP…EISE and IQNF…QIQM.

Belongs to the dynein heavy chain family. In terms of assembly, consists of at least two heavy chains and a number of intermediate and light chains.

Its subcellular location is the cytoplasm. It is found in the cytoskeleton. The protein resides in the cilium axoneme. In terms of biological role, force generating protein of respiratory cilia. Produces force towards the minus ends of microtubules. Dynein has ATPase activity; the force-producing power stroke is thought to occur on release of ADP. Involved in sperm motility; implicated in sperm flagellar assembly. The protein is Dynein axonemal heavy chain 3 (Dnah3) of Mus musculus (Mouse).